The chain runs to 218 residues: Adenylate kinase (218 aa).

Glycine 10–threonine 15 contributes to the ATP binding site. The segment at serine 30–valine 59 is NMP. Residues threonine 31, arginine 36, glycine 57–valine 59, glycine 85–arginine 88, and glutamine 92 contribute to the AMP site. The tract at residues glycine 122 to aspartate 159 is LID. ATP contacts are provided by residues arginine 123 and threonine 132–tyrosine 133. Residues arginine 156 and arginine 167 each contribute to the AMP site. Residue arginine 203 coordinates ATP.

It belongs to the adenylate kinase family. In terms of assembly, monomer.

The protein resides in the cytoplasm. It catalyses the reaction AMP + ATP = 2 ADP. It functions in the pathway purine metabolism; AMP biosynthesis via salvage pathway; AMP from ADP: step 1/1. In terms of biological role, catalyzes the reversible transfer of the terminal phosphate group between ATP and AMP. Plays an important role in cellular energy homeostasis and in adenine nucleotide metabolism. The protein is Adenylate kinase of Chromobacterium violaceum (strain ATCC 12472 / DSM 30191 / JCM 1249 / CCUG 213 / NBRC 12614 / NCIMB 9131 / NCTC 9757 / MK).